Consider the following 181-residue polypeptide: Large ribosomal subunit protein eL18 (181 aa).

This sequence belongs to the eukaryotic ribosomal protein eL18 family.

Its subcellular location is the cytoplasm. The chain is Large ribosomal subunit protein eL18 (rpl18) from Dictyostelium discoideum (Social amoeba).